The chain runs to 312 residues: Ribosomal protein L11 methyltransferase (312 aa).

S-adenosyl-L-methionine-binding residues include Thr163, Gly184, Asp206, and Asn248.

This sequence belongs to the methyltransferase superfamily. PrmA family.

Its subcellular location is the cytoplasm. The catalysed reaction is L-lysyl-[protein] + 3 S-adenosyl-L-methionine = N(6),N(6),N(6)-trimethyl-L-lysyl-[protein] + 3 S-adenosyl-L-homocysteine + 3 H(+). In terms of biological role, methylates ribosomal protein L11. This is Ribosomal protein L11 methyltransferase from Clostridium botulinum (strain Hall / ATCC 3502 / NCTC 13319 / Type A).